Consider the following 667-residue polypeptide: Probable potassium transport system protein Kup (667 aa).

12 helical membrane passes run 16–36, 58–78, 101–121, 146–166, 167–187, 221–241, 253–273, 294–314, 343–363, 373–393, 399–419, and 431–451; these read GFII…LYTM, VSLI…LIAL, WLII…ALTP, TNVI…QRFG, TGVI…VLGI, IFIL…YSDL, WPFV…WILA, VYLV…LISG, LYIP…VLYF, YGLA…YYLI, PLLA…FFLA, and VVVL…GTVI.

The protein belongs to the HAK/KUP transporter (TC 2.A.72) family.

It is found in the cell membrane. The catalysed reaction is K(+)(in) + H(+)(in) = K(+)(out) + H(+)(out). In terms of biological role, transport of potassium into the cell. Likely operates as a K(+):H(+) symporter. The polypeptide is Probable potassium transport system protein Kup (Streptococcus equi subsp. zooepidemicus (strain H70)).